A 682-amino-acid chain; its full sequence is Tail-specific protease (682 aa).

Residues 1–22 (MNMFFRLTALAGLLAIAGQTFA) form the signal peptide. Residues 238 to 322 (NTEMSLSLEG…SKVRLEILPA (85 aa)) form the PDZ domain. Catalysis depends on charge relay system residues Ser-452, Asp-463, and Lys-477. The segment covering 635-650 (GKPELKKLDDLPKDYQ) has biased composition (basic and acidic residues). The segment at 635–654 (GKPELKKLDDLPKDYQEPDP) is disordered.

This sequence belongs to the peptidase S41A family.

The protein localises to the cell inner membrane. The enzyme catalyses The enzyme shows specific recognition of a C-terminal tripeptide, Xaa-Yaa-Zaa, in which Xaa is preferably Ala or Leu, Yaa is preferably Ala or Tyr, and Zaa is preferably Ala, but then cleaves at a variable distance from the C-terminus. A typical cleavage is -Ala-Ala-|-Arg-Ala-Ala-Lys-Glu-Asn-Tyr-Ala-Leu-Ala-Ala.. Functionally, involved in the cleavage of a C-terminal peptide of 11 residues from the precursor form of penicillin-binding protein 3 (PBP3). May be involved in protection of the bacterium from thermal and osmotic stresses. The polypeptide is Tail-specific protease (prc) (Escherichia coli (strain K12)).